Consider the following 56-residue polypeptide: Photosystem II assembly protein Psb34 (56 aa).

At 1 to 33 (MRYTTDEGGRLNNFAIEPKVYQAQPWTPQQKVR) the chain is on the cytoplasmic side. The chain crosses the membrane as a helical span at residues 34–54 (AALLVGGGLLLVAGLVAIAVG). Topologically, residues 55–56 (VS) are extracellular.

As to quaternary structure, part of photosystem II (PSII) assembly intermediate complex PSII-I; crystallized from a strain without psbJ, it forms monomeric PSII before addition of the oxygen evolving complex. PSII-I includes 3 assembly factors not found in mature PSII (Psb27, Psb28 and Psb34). The N-terminus of Psb34 (this protein) binds to CP47 (psbB) in close proximity to PsbH on the cytoplasmic face of PSII.

It is found in the cellular thylakoid membrane. In terms of biological role, involved in photosystem II (PSII) assembly and/or repair, probably in conversion of late PSII assembly intermediates into mature dimeric PSII. In Thermosynechococcus vestitus (strain NIES-2133 / IAM M-273 / BP-1), this protein is Photosystem II assembly protein Psb34.